Reading from the N-terminus, the 230-residue chain is Membrane protein (230 aa).

At methionine 1 to glutamate 24 the chain is on the virion surface side. Residues tryptophan 25–threonine 45 form a helical membrane-spanning segment. Topologically, residues serine 46 to lysine 55 are intravirion. The chain crosses the membrane as a helical span at residues methionine 56–tyrosine 76. The Virion surface segment spans residues alanine 77 to glycine 84. Residues phenylalanine 85–isoleucine 105 traverse the membrane as a helical segment. Topologically, residues arginine 106–asparagine 228 are intravirion.

Belongs to the betacoronaviruses M protein family. Homomultimer. Interacts with envelope E protein in the budding compartment of the host cell, which is located between endoplasmic reticulum and the Golgi complex. Forms a complex with HE and S proteins. Interacts with nucleocapsid N protein. This interaction probably participates in RNA packaging into the virus.

The protein localises to the virion membrane. It is found in the host Golgi apparatus membrane. Component of the viral envelope that plays a central role in virus morphogenesis and assembly via its interactions with other viral proteins. In Porcine hemagglutinating encephalomyelitis virus (strain 67N) (HEV-67N), this protein is Membrane protein.